We begin with the raw amino-acid sequence, 33 residues long: Brevinin-2DYc (33 aa).

Residues C27 and C33 are joined by a disulfide bond.

Expressed by the skin glands.

The protein localises to the secreted. Its function is as follows. Antimicrobial peptide. A mixture of Brevinin-2DYc/2DYd is active against the Gram-positive bacterium S.aureus (MIC=15 uM) and the Gram-negative bacterium E.coli (MIC=15 uM). The chain is Brevinin-2DYc from Rana dybowskii (Dybovsky's frog).